Reading from the N-terminus, the 289-residue chain is tRNA acetyltransferase TAN1 (289 aa).

The span at 1-10 (MGEKRNRNGK) shows a compositional bias: basic and acidic residues. Disordered regions lie at residues 1–31 (MGEK…DPGT) and 64–83 (DIKE…LSIE). Position 72 is a phosphoserine (serine 72). The THUMP domain maps to 146–259 (ADPKNMVKRT…KSNIGMCVVD (114 aa)).

It is found in the cytoplasm. The protein localises to the nucleus. Its function is as follows. Probable tRNA acetyltransferase required for the formation of the modified nucleoside N(4)-acetylcytidine in serine and leucine tRNAs. Binds RNA. The chain is tRNA acetyltransferase TAN1 (TAN1) from Saccharomyces cerevisiae (strain ATCC 204508 / S288c) (Baker's yeast).